The following is a 695-amino-acid chain: Protein MALE DISCOVERER 1 (695 aa).

A signal peptide spans 1–29 (MGCRWNPIGFQFSCFMFLIITLQSRSSLS). Topologically, residues 30–340 (LESEGFVLLK…SKGFKDVWLY (311 aa)) are extracellular. Asn-56 and Asn-80 each carry an N-linked (GlcNAc...) asparagine glycan. LRR repeat units follow at residues 75-98 (KVQM…SQLS), 99-121 (ELRS…FASF), 123-144 (KLEF…ELNK), and 147-168 (TPEN…KFLR). An N-linked (GlcNAc...) asparagine glycan is attached at Asn-247. Residues 302–325 (PPLIPPSSPPPLPTNNTIASDPPR) form a disordered region. Pro residues predominate over residues 303–314 (PLIPPSSPPPLP). The N-linked (GlcNAc...) asparagine glycan is linked to Asn-316. The chain crosses the membrane as a helical span at residues 341–361 (VVIGVAAFVAMLIIVAVIFFF). The Cytoplasmic segment spans residues 362–695 (RKRAVKSIGP…ELEILSSEAT (334 aa)). A Protein kinase domain is found at 363–668 (KRAVKSIGPW…YVVQQLKEVI (306 aa)). Position 652 is a phosphoserine (Ser-652).

The protein belongs to the protein kinase superfamily. Ser/Thr protein kinase family. Homodimer. Interacts with MIK1, MIK2 and LURE1.2. LURE1.2 enhances the heterodimerization of MDIS1 with MIK1 or MIK2. In terms of processing, phosphorylated by MIK1. Expressed in pollen tubes and seedlings.

Its subcellular location is the cell membrane. It localises to the endomembrane system. It carries out the reaction L-seryl-[protein] + ATP = O-phospho-L-seryl-[protein] + ADP + H(+). The enzyme catalyses L-threonyl-[protein] + ATP = O-phospho-L-threonyl-[protein] + ADP + H(+). Functionally, involved in the pollen tube perception of the female signal. This Arabidopsis thaliana (Mouse-ear cress) protein is Protein MALE DISCOVERER 1.